Consider the following 100-residue polypeptide: Virion membrane protein OPG135 (100 aa).

The signal sequence occupies residues 1–22 (MSCYTAILKSVGGLALFQVANG). Topologically, residues 23–45 (AIDLCRHFFMYFCEQKLRPNSFW) are intravirion. Residues 46 to 66 (FVVVRAIASMIMYLVLGIALL) traverse the membrane as a helical segment. Residues 67 to 83 (YISEQDDKKNTNNDSNS) lie on the Virion surface side of the membrane. The interval 75 to 100 (KNTNNDSNSNNDKRNVSSINSNSSHK) is disordered. Asn79, Asn89, and Asn96 each carry an N-linked (GlcNAc...) asparagine; by host glycan.

This sequence belongs to the chordopoxvirinae A9 family.

The protein localises to the virion membrane. Its subcellular location is the host cytoplasm. Functionally, envelope protein. Required for an early step in virion morphogenesis. In Monkeypox virus, this protein is Virion membrane protein OPG135 (OPG135).